The primary structure comprises 182 residues: ATP-dependent protease subunit HslV (182 aa).

Thr-10 is an active-site residue. Positions 166, 169, and 172 each coordinate Na(+).

This sequence belongs to the peptidase T1B family. HslV subfamily. A double ring-shaped homohexamer of HslV is capped on each side by a ring-shaped HslU homohexamer. The assembly of the HslU/HslV complex is dependent on binding of ATP.

The protein resides in the cytoplasm. It catalyses the reaction ATP-dependent cleavage of peptide bonds with broad specificity.. Allosterically activated by HslU binding. Its function is as follows. Protease subunit of a proteasome-like degradation complex believed to be a general protein degrading machinery. This chain is ATP-dependent protease subunit HslV, found in Rickettsia typhi (strain ATCC VR-144 / Wilmington).